The sequence spans 212 residues: MSDFGINLDAICDNVKKGQTESRTGSQLSNRSSRRMDFVDDEELSTYFNSKASVTQSDSCSNDLEIKHSIITEAVVCDESAHVSADAIQEKDETVPQMDHRIMKWMLDSHDGVSLNGGINFTKAKSKLKETENEITEMKSKTNLLVNASVGINSNVGAFNPINQTIKTEAVSDMFEDEDIEGCICKNCPYREKYRKLRSKMKNVLIDMINEM.

Asp86 is a Mg(2+) binding site.

It belongs to the rotavirus NSP5 family. In terms of assembly, homodimer. Interacts with VP1. Interacts with VP2. Interacts with NSP2 and NSP6. Mg(2+) is required as a cofactor. O-glycosylated.

The protein localises to the host cytoplasm. Functionally, plays an essential role in the viral genome replication. Participates, together with NSP2, in the formation of viral factories (viroplasms) which are large inclusions in the host cytoplasm where replication intermediates are assembled and viral RNA replication takes place. Orchestrates the recruitment of viroplasmic proteins such as capsid proteins to these factories. The polypeptide is Non-structural protein 5 (Homo sapiens (Human)).